Reading from the N-terminus, the 144-residue chain is Peptidyl-Asp metalloendopeptidase (144 aa).

His-64 contributes to the Zn(2+) binding site. Residue Glu-65 is part of the active site. His-68 is a binding site for Zn(2+).

Belongs to the peptidase M72 family. Zn(2+) is required as a cofactor.

The enzyme catalyses Cleavage of Xaa-|-Asp, Xaa-|-Glu and Xaa-|-cysteic acid bonds.. Metalloprotease, specifically cleaves on the N-terminal side of aspartyl, glutamyl and cysteic acid residues. The chain is Peptidyl-Asp metalloendopeptidase from Pseudomonas fragi.